We begin with the raw amino-acid sequence, 166 residues long: Interferon gamma-related (166 aa).

Positions 1–26 are cleaved as a signal peptide; the sequence is MYCRLNMVYLICALLLIVSLQGTVGA. Asparagine 91 is a glycosylation site (N-linked (GlcNAc...) asparagine).

It belongs to the type II (or gamma) interferon family. In terms of assembly, homodimer. Strongly expressed in spleen. Also detected at lower levels in gill, kidney, heart, brain and intestine. In immune cell populations, expressed at highest levels in peripheral blood leukocytes and at lower levels in splenocytes, granulocytes, monocytes and macrophages.

The protein resides in the secreted. Functionally, cytokine which binds to interferon gamma receptor 1 (ifngr1). Has activating effects on primary macrophages. Induces nitric oxide production and phagocytic responses in macrophages. Primes monocytes for production of reactive oxygen intermediates (ROI), although the effect is short-lived. Also has inhibitory effects on monocyte priming by ifng1 (interferon gamma 1) and tnfb (TNF-alpha 2). Stimulates phosphorylation of the JAK/STAT signal transducer stat1, but fails to induce stat1 nuclear localization. Promotes increased expression of a number of genes important for macrophage activity, including the interferon regulatory factors irf2 and irf9. The chain is Interferon gamma-related from Carassius auratus (Goldfish).